A 213-amino-acid polypeptide reads, in one-letter code: Na(+)-translocating NADH-quinone reductase subunit E (213 aa).

Transmembrane regions (helical) follow at residues 12-32 (AVFV…FLAV), 40-60 (IGLG…NQLI), 92-112 (FLGF…LEMF), 124-144 (LGIF…SLFM), 155-175 (VVFG…LAGI), and 191-211 (LGIT…FSGI).

This sequence belongs to the NqrDE/RnfAE family. As to quaternary structure, composed of six subunits; NqrA, NqrB, NqrC, NqrD, NqrE and NqrF.

The protein localises to the cell inner membrane. The enzyme catalyses a ubiquinone + n Na(+)(in) + NADH + H(+) = a ubiquinol + n Na(+)(out) + NAD(+). Its function is as follows. NQR complex catalyzes the reduction of ubiquinone-1 to ubiquinol by two successive reactions, coupled with the transport of Na(+) ions from the cytoplasm to the periplasm. NqrA to NqrE are probably involved in the second step, the conversion of ubisemiquinone to ubiquinol. In Rhodopirellula baltica (strain DSM 10527 / NCIMB 13988 / SH1), this protein is Na(+)-translocating NADH-quinone reductase subunit E.